Reading from the N-terminus, the 800-residue chain is MEPIVKQENPVTTSTLSTWKPAARNKTIPPPESVIELSSSNEGSELGENLDEIAEIQSVDRTGGDDVSGTKRARSDSIASPAKRLAVMIPDDDEEFLLSTTSGQAILALPATPCNVVAAPSSWGSCKQFWKAGDYEGTSGGDWEVSAGGFDHVRVHPKFLHSNATSHKWSLGAFAELLDNALDEVRSGATFVNVDMIQNRKDGSKMILIEDNGGGMNPEKMRHCMSLGYSAKSKLADTIGQYGNGFKTSTMRLGADVIVFSRCLGKDGKSSTQSIGLLSYTFLKSTGKEDIVVPMLDYERRDSEWCPITRSSVSDWEKNVETVVQWSPYATEEELLCQFNLMKKHGTRIIIYNLWEDDEGMLELDFDTDPHDIQLRGVNRDDKNIVMASQFPNSRHYLTYKHSLRSYASILYLKISHEFRIILRGKDVEHHNIVNDMMQTEKITYRPKEAADVSQLSAVVTIGFVKDAKHHVDVQGFNVYHKNRLIKPFWRIWNAAGSDGRGVIGVLEANFVEPAHDKQGFERTTVLSRLEARLLHMQKDYWRSKCHKIGYAKRQGRKSAKDTEKDTEDRESSPEFDPKGSASSRKRTVPSSFKTPTAAPRFNTPTAASEKFNPRSNVNGGGKGSVKVSKDIGYKSSEKGGKLGNSFSKSNKRAKPQGARAVEVTNSDDDYDCDSSPERNVTELPGKSSELPKPQSGPRTLSQLEQENNELRERLDKKEEVFLLLQKDLRRERELRKTLEAEVETLKNKLKEMDKEQASLIDVFAEDRDRRDKEEENLRIKLEEASNTIQKLIDGKARGR.

Disordered stretches follow at residues 1 to 76 (MEPI…ARSD) and 552 to 702 (AKRQ…RTLS). The span at 9–18 (NPVTTSTLST) shows a compositional bias: polar residues. Over residues 36–47 (ELSSSNEGSELG) the composition is skewed to low complexity. Composition is skewed to basic and acidic residues over residues 559 to 578 (SAKD…EFDP) and 628 to 641 (VSKD…EKGG). Residues 666-675 (NSDDDYDCDS) show a composition bias toward acidic residues. Residues 699-766 (RTLSQLEQEN…QASLIDVFAE (68 aa)) adopt a coiled-coil conformation. Short sequence motifs (nuclear localization signal) lie at residues 716–723 (DKKEEVFL) and 735–742 (LRKTLEAE).

Belongs to the MORC ATPase protein family. Homodimer and heterodimer. Component of an RNA-directed DNA methylation (RdDM) complex. Forms homomeric complexes. Mg(2+) is required as a cofactor. Mn(2+) serves as cofactor.

It localises to the nucleus. In terms of biological role, exhibits ATPase activity. Binds DNA/RNA in a non-specific manner and exhibits endonuclease activity. Probably involved in DNA repair. Involved in RNA-directed DNA methylation (RdDM) as a component of the RdDM machinery and required for gene silencing. May also be involved in the regulation of chromatin architecture to maintain gene silencing. Together with MORC7, acts to suppress a wide set of non-methylated protein-coding genes, especially involved in pathogen response. Positive regulator of defense against the oomycete Hyaloperonospora arabidopsidis (Hpa). In Arabidopsis thaliana (Mouse-ear cress), this protein is Protein MICRORCHIDIA 4.